The following is a 148-amino-acid chain: Putative nickel-responsive regulator (148 aa).

Ni(2+) contacts are provided by His-77, His-88, His-90, and Cys-96.

Belongs to the transcriptional regulatory CopG/NikR family. Requires Ni(2+) as cofactor.

Its function is as follows. Transcriptional regulator. This chain is Putative nickel-responsive regulator, found in Bradyrhizobium diazoefficiens (strain JCM 10833 / BCRC 13528 / IAM 13628 / NBRC 14792 / USDA 110).